We begin with the raw amino-acid sequence, 423 residues long: Lysosomal acid phosphatase (423 aa).

The N-terminal stretch at 1 to 30 (MAGKRSGWSRAALLQLLLGVNLVVMPPTRA) is a signal peptide. Over 31–380 (RSLRFVTLLY…QLASGPADTE (350 aa)) the chain is Lumenal. The active-site Nucleophile is histidine 42. Residues asparagine 92, asparagine 133, asparagine 167, asparagine 177, asparagine 191, and asparagine 267 are each glycosylated (N-linked (GlcNAc...) asparagine). 3 cysteine pairs are disulfide-bonded: cysteine 159–cysteine 370, cysteine 212–cysteine 310, and cysteine 345–cysteine 349. Catalysis depends on aspartate 287, which acts as the Proton donor. N-linked (GlcNAc...) asparagine glycosylation is found at asparagine 322 and asparagine 331. The helical transmembrane segment at 381 to 401 (VIVALAVCGSILFLLIVLLLT) threads the bilayer. Topologically, residues 402 to 423 (VLFRMQAQPPGYRHVADGEDHA) are cytoplasmic.

It belongs to the histidine acid phosphatase family. In terms of processing, the membrane-bound form is converted to the soluble form by sequential proteolytic processing. First, the C-terminal cytoplasmic tail is removed. Cleavage by a lysosomal protease releases the soluble form in the lysosome lumen. N-glycosylated. The intermediates formed during enzymatic deglycosylation suggest that all eight predicted N-glycosylation sites are used.

Its subcellular location is the lysosome membrane. It is found in the lysosome lumen. The catalysed reaction is a phosphate monoester + H2O = an alcohol + phosphate. The sequence is that of Lysosomal acid phosphatase (ACP2) from Homo sapiens (Human).